The following is a 287-amino-acid chain: Putative holocytochrome-c1 synthase (287 aa).

A compositionally biased stretch (polar residues) spans 1–12 (MRGFGSDSSQAS). 2 disordered regions span residues 1–63 (MRGF…QPSS) and 81–100 (QSQSANSTQQAQPPKLSAPL). Low complexity-rich tracts occupy residues 31–63 (QARAAQSASTSAAPALPQSVQVAPASQPSQPSS) and 81–92 (QSQSANSTQQAQ).

This sequence belongs to the cytochrome c-type heme lyase family.

It is found in the mitochondrion inner membrane. It catalyses the reaction holo-[cytochrome c] = apo-[cytochrome c] + heme b. Functionally, probable lyase that catalyzes the covalent linking of the heme group to the cytochrome C apoprotein to produce the mature functional cytochrome. The polypeptide is Putative holocytochrome-c1 synthase (Chaetomium thermophilum (strain DSM 1495 / CBS 144.50 / IMI 039719) (Thermochaetoides thermophila)).